Consider the following 158-residue polypeptide: Transcription factor BTF3 homolog 4 (158 aa).

The region spanning 33-98 (TADDKKLQSS…AETKQLTEML (66 aa)) is the NAC-A/B domain. The segment at 125–158 (LDNKAPKAEDIDEEDDDVPDLVENFDEASKNEAN) is disordered. Residues 134-150 (DIDEEDDDVPDLVENFD) show a composition bias toward acidic residues.

This sequence belongs to the NAC-beta family.

The polypeptide is Transcription factor BTF3 homolog 4 (btf3l4) (Danio rerio (Zebrafish)).